Reading from the N-terminus, the 164-residue chain is Phosphopantetheine adenylyltransferase (164 aa).

Serine 9 provides a ligand contact to substrate. ATP is bound by residues 9–10 (SF) and histidine 17. Lysine 41, leucine 73, and lysine 87 together coordinate substrate. Residues 88-90 (GLR), glutamate 98, and 123-129 (YSYISSS) each bind ATP.

The protein belongs to the bacterial CoaD family. As to quaternary structure, homohexamer. It depends on Mg(2+) as a cofactor.

It localises to the cytoplasm. It carries out the reaction (R)-4'-phosphopantetheine + ATP + H(+) = 3'-dephospho-CoA + diphosphate. It participates in cofactor biosynthesis; coenzyme A biosynthesis; CoA from (R)-pantothenate: step 4/5. In terms of biological role, reversibly transfers an adenylyl group from ATP to 4'-phosphopantetheine, yielding dephospho-CoA (dPCoA) and pyrophosphate. The polypeptide is Phosphopantetheine adenylyltransferase (Clostridium perfringens (strain ATCC 13124 / DSM 756 / JCM 1290 / NCIMB 6125 / NCTC 8237 / Type A)).